The following is a 942-amino-acid chain: Alpha,alpha-trehalose-phosphate synthase [UDP-forming] 1 (942 aa).

The interval 28–57 (REKRKSNRARNPNDVAGSSENSENDLRLEG) is disordered. The glycosyltransferase stretch occupies residues 92 to 559 (QRLLVVANRL…AETFVSELND (468 aa)). A disordered region spans residues 815–892 (DMPAIARSRP…LGNSRRPSPE (78 aa)). Composition is skewed to low complexity over residues 821–833 (RSRPSSDSGAKSS) and 841–867 (SKSTHNNNKSGSKSSSSSNSNNNNKSS). Positions 879–888 (SNHSLGNSRR) are enriched in polar residues.

It in the N-terminal section; belongs to the glycosyltransferase 20 family. The protein in the C-terminal section; belongs to the trehalose phosphatase family. As to expression, expressed in seedlings, leaves, roots, stems, flowers and siliques.

The protein resides in the vacuole. Its subcellular location is the secreted. It is found in the cell wall. The protein localises to the cytoplasm. It catalyses the reaction D-glucose 6-phosphate + UDP-alpha-D-glucose = alpha,alpha-trehalose 6-phosphate + UDP + H(+). Its function is as follows. Required for normal embryo development, vegetative growth and transition to flowering. Regulates embryo growth, cell wall deposition, starch and sucrose degradation, but not cell differentiation. Involved in the regulation of glucose sensing and signaling genes during plant development. This chain is Alpha,alpha-trehalose-phosphate synthase [UDP-forming] 1, found in Arabidopsis thaliana (Mouse-ear cress).